A 295-amino-acid chain; its full sequence is ATP synthase gamma chain (295 aa).

Belongs to the ATPase gamma chain family. As to quaternary structure, F-type ATPases have 2 components, CF(1) - the catalytic core - and CF(0) - the membrane proton channel. CF(1) has five subunits: alpha(3), beta(3), gamma(1), delta(1), epsilon(1). CF(0) has three main subunits: a, b and c.

The protein resides in the cell inner membrane. Its function is as follows. Produces ATP from ADP in the presence of a proton gradient across the membrane. The gamma chain is believed to be important in regulating ATPase activity and the flow of protons through the CF(0) complex. This Campylobacter concisus (strain 13826) protein is ATP synthase gamma chain.